Here is a 343-residue protein sequence, read N- to C-terminus: Selenide, water dikinase (343 aa).

Residue U16 is part of the active site. U16 is a non-standard amino acid (selenocysteine). Residues K19 and 46–48 (GAE) contribute to the ATP site. Position 49 (D49) interacts with Mg(2+). ATP-binding positions include D66, D89, and 137–139 (GHT). Position 89 (D89) interacts with Mg(2+). A Mg(2+)-binding site is contributed by D225.

The protein belongs to the selenophosphate synthase 1 family. Class I subfamily. In terms of assembly, homodimer. Mg(2+) is required as a cofactor.

The catalysed reaction is hydrogenselenide + ATP + H2O = selenophosphate + AMP + phosphate + 2 H(+). Functionally, synthesizes selenophosphate from selenide and ATP. This Citrifermentans bemidjiense (strain ATCC BAA-1014 / DSM 16622 / JCM 12645 / Bem) (Geobacter bemidjiensis) protein is Selenide, water dikinase.